Reading from the N-terminus, the 346-residue chain is Free fatty acid receptor 3 (346 aa).

The Extracellular segment spans residues 1–19; the sequence is MDTGPDQSYFSGNHWFVFS. Residues 20-40 traverse the membrane as a helical segment; sequence VYLLTFLVGLPLNLLALVVFV. At 41–47 the chain is on the cytoplasmic side; it reads GKLQRRP. A helical transmembrane segment spans residues 48-68; sequence VAVDVLLLNLTASDLLLLLFL. Residues 69–88 lie on the Extracellular side of the membrane; that stretch reads PFRMVEAANGMHWPLPFILC. Cysteines 88 and 169 form a disulfide. Residues 89–111 form a helical membrane-spanning segment; sequence PLSGFIFFTTIYLTALFLAAVSI. Over 112-132 the chain is Cytoplasmic; it reads ERFLSVAHPLWYKTRPRLGQA. The chain crosses the membrane as a helical span at residues 133–153; sequence GLVSVACWLLASAHCSVVYVI. The Extracellular segment spans residues 154 to 178; that stretch reads EFSGDISHSQGTNGTCYLEFRKDQL. Residue Asn-166 is glycosylated (N-linked (GlcNAc...) asparagine). Residues 179 to 199 form a helical membrane-spanning segment; sequence AILLPVRLEMAVVLFVVPLII. Residues 200 to 222 lie on the Cytoplasmic side of the membrane; it reads TSYCYSRLVWILGRGGSHRRQRR. A helical transmembrane segment spans residues 223 to 243; sequence VAGLLAATLLNFLVCFGPYNV. Residues 244–258 lie on the Extracellular side of the membrane; it reads SHVVGYICGESPAWR. Residues 259 to 279 form a helical membrane-spanning segment; it reads IYVTLLSTLNSCVDPFVYYFS. At 280–346 the chain is on the cytoplasmic side; the sequence is SSGFQADFHE…TGGQVACAES (67 aa). Residues 307 to 330 show a composition bias toward basic and acidic residues; sequence MELKEQKGGEEQRADRPAERKTSE. Residues 307–346 are disordered; the sequence is MELKEQKGGEEQRADRPAERKTSEHSQGCGTGGQVACAES.

This sequence belongs to the G-protein coupled receptor 1 family. As to expression, highest level in adipose tissue, and lower expression across all tissues tested. Expressed in sympathetic ganglia.

The protein localises to the cell membrane. In terms of biological role, g protein-coupled receptor that is activated by a major product of dietary fiber digestion, the short chain fatty acids (SCFAs), and that plays a role in the regulation of whole-body energy homeostasis and in intestinal immunity. In omnivorous mammals, the short chain fatty acids acetate, propionate and butyrate are produced primarily by the gut microbiome that metabolizes dietary fibers. SCFAs serve as a source of energy but also act as signaling molecules. That G protein-coupled receptor is probably coupled to the pertussis toxin-sensitive, G(i/o)-alpha family of G proteins. Its activation results in the formation of inositol 1,4,5-trisphosphate, the mobilization of intracellular calcium, the phosphorylation of the MAPK3/ERK1 and MAPK1/ERK2 kinases and the inhibition of intracellular cAMP accumulation. Activated by SCFAs and by beta-hydroxybutyrate, a ketone body produced by the liver upon starvation, it inhibits N-type calcium channels and modulates the activity of sympathetic neurons through a signaling cascade involving the beta and gamma subunits of its coupled G protein, phospholipase C and MAP kinases. Thereby, it may regulate energy expenditure through the control of the sympathetic nervous system that controls for instance heart rate. Upon activation by SCFAs accumulating in the intestine, it may also signal to the brain via neural circuits which in turn would regulate intestinal gluconeogenesis. May also control the production of hormones involved in whole-body energy homeostasis. May for instance, regulate blood pressure through renin secretion. May also regulate secretion of the PYY peptide by enteroendocrine cells and control gut motility, intestinal transit rate, and the harvesting of energy from SCFAs produced by gut microbiota. May also indirectly regulate the production of LEP/Leptin, a hormone acting on the CNS to inhibit food intake, in response to the presence of short-chain fatty acids in the intestine. Finally, may also play a role in glucose homeostasis. Besides its role in energy homeostasis, may play a role in intestinal immunity. May mediate the activation of the inflammatory and immune response by SCFAs in the gut, regulating the rapid production of chemokines and cytokines by intestinal epithelial cells. Among SCFAs, the fatty acids containing less than 6 carbons, the most potent activators are probably propionate, butyrate and pentanoate while acetate is a poor activator. The polypeptide is Free fatty acid receptor 3 (FFAR3) (Homo sapiens (Human)).